We begin with the raw amino-acid sequence, 406 residues long: Cysteine desulfurase (406 aa).

At lysine 226 the chain carries N6-(pyridoxal phosphate)lysine. The Cysteine persulfide intermediate role is filled by cysteine 364.

Belongs to the class-V pyridoxal-phosphate-dependent aminotransferase family. Csd subfamily. In terms of assembly, homodimer. Interacts with SufE and the SufBCD complex composed of SufB, SufC and SufD. The interaction with SufE is required to mediate the direct transfer of the sulfur atom from the S-sulfanylcysteine. It depends on pyridoxal 5'-phosphate as a cofactor.

The protein resides in the cytoplasm. It carries out the reaction (sulfur carrier)-H + L-cysteine = (sulfur carrier)-SH + L-alanine. The catalysed reaction is L-selenocysteine + AH2 = hydrogenselenide + L-alanine + A + H(+). Its pathway is cofactor biosynthesis; iron-sulfur cluster biosynthesis. Cysteine desulfurases mobilize the sulfur from L-cysteine to yield L-alanine, an essential step in sulfur metabolism for biosynthesis of a variety of sulfur-containing biomolecules. Component of the suf operon, which is activated and required under specific conditions such as oxidative stress and iron limitation. Acts as a potent selenocysteine lyase in vitro, that mobilizes selenium from L-selenocysteine. Selenocysteine lyase activity is however unsure in vivo. The polypeptide is Cysteine desulfurase (Salmonella agona (strain SL483)).